A 226-amino-acid chain; its full sequence is CASP-like protein 2BC1 (226 aa).

Over 1–37 the chain is Cytoplasmic; that stretch reads MRKHIDIVFSRLSGPILNPPPDNNVIPKTDRKLRITE. A helical membrane pass occupies residues 38–58; that stretch reads VILRFAVVIFALVSAIMVGTA. The Extracellular segment spans residues 59–78; it reads SGTRDLGGGIRIHAHFTLLK. Residues 79–99 form a helical membrane-spanning segment; sequence TLPFLVIVDGILAVYSLLQGL. The Cytoplasmic segment spans residues 100–114; that stretch reads RCFLSLYMRHILLNK. Residues 115–135 traverse the membrane as a helical segment; that stretch reads ALAWTIFCCDQALAYVIFAAA. The Extracellular segment spans residues 136 to 170; sequence ASTAETAYISEQGLDELQWIKVCMFFRAYCFKSGA. The helical transmembrane segment at 171 to 191 threads the bilayer; it reads GMINAFLAALCMVFVSGMSVF. Topologically, residues 192–226 are cytoplasmic; it reads HLFRLYGEKRAYGHIAEQVVISEEAAERRNSLNGI.

This sequence belongs to the Casparian strip membrane proteins (CASP) family. Homodimer and heterodimers.

Its subcellular location is the cell membrane. The sequence is that of CASP-like protein 2BC1 from Picea sitchensis (Sitka spruce).